We begin with the raw amino-acid sequence, 288 residues long: NAD kinase (288 aa).

Aspartate 68 serves as the catalytic Proton acceptor. NAD(+) contacts are provided by residues 68 to 69 (DG), 142 to 143 (ND), arginine 153, aspartate 172, and glutamine 242.

Belongs to the NAD kinase family. The cofactor is a divalent metal cation.

It is found in the cytoplasm. It catalyses the reaction NAD(+) + ATP = ADP + NADP(+) + H(+). In terms of biological role, involved in the regulation of the intracellular balance of NAD and NADP, and is a key enzyme in the biosynthesis of NADP. Catalyzes specifically the phosphorylation on 2'-hydroxyl of the adenosine moiety of NAD to yield NADP. This chain is NAD kinase, found in Desulforamulus reducens (strain ATCC BAA-1160 / DSM 100696 / MI-1) (Desulfotomaculum reducens).